Here is a 186-residue protein sequence, read N- to C-terminus: MRAIMVGPPGSGKGTQCGLIQSRLGISVIATGDVFRERMKTDMALRDIVSSGGYVSDSTTNRIVEDCLDKEDVSSGFVLDGYPRTLQQLDFLEGFLKRRALTLDAVFSLEVATDLLIERLRARSKESGRTDDRDSVIARRLEIYTEMTLPIIDACEEKGLLHRIDASKGIEEVFQSIKDVFDRVTI.

Position 10 to 15 (10 to 15 (GSGKGT)) interacts with ATP. The tract at residues 30 to 55 (ATGDVFRERMKTDMALRDIVSSGGYV) is NMP. AMP is bound by residues T31, R36, 53-55 (GYV), 81-84 (GYPR), and Q88. The segment at 122-132 (ARSKESGRTDD) is LID. R123 contributes to the ATP binding site. AMP is bound by residues R129 and R140. K168 lines the ATP pocket.

Belongs to the adenylate kinase family. Monomer.

The protein localises to the cytoplasm. The catalysed reaction is AMP + ATP = 2 ADP. It functions in the pathway purine metabolism; AMP biosynthesis via salvage pathway; AMP from ADP: step 1/1. Functionally, catalyzes the reversible transfer of the terminal phosphate group between ATP and AMP. Plays an important role in cellular energy homeostasis and in adenine nucleotide metabolism. The polypeptide is Adenylate kinase (Tropheryma whipplei (strain TW08/27) (Whipple's bacillus)).